A 743-amino-acid chain; its full sequence is POU domain, class 2, transcription factor 1 (743 aa).

Positions 1–11 (MNNPSETSKPS) are enriched in polar residues. Disordered stretches follow at residues 1 to 34 (MNNPSETSKPSMESGDGNTGTQTNGLDFQKQPVP), 67 to 95 (SLNVQSKSNEESGDSQQPSQPSQQPSVQA), 258 to 283 (ATPIQTLPQSQSTPKRIDTPSLEEPS), and 357 to 381 (SSDSSLSSPSALNSPGIEGLSRRRK). Over residues 81–95 (SQQPSQPSQQPSVQA) the composition is skewed to low complexity. T270 and T276 each carry phosphothreonine. Positions 280–354 (EEPSDLEELE…LLEKWLNDAE (75 aa)) constitute a POU-specific domain. S283 carries the phosphoserine modification. Positions 357–371 (SSDSSLSSPSALNSP) are enriched in low complexity. Residues 379 to 438 (RRKKRTSIETNIRVALEKSFLENQKPTSEEITMIADQLNMEKEVIRVWFCNRRQKEKRIN) constitute a DNA-binding region (homeobox). Phosphoserine occurs at positions 385 and 448. A compositionally biased stretch (polar residues) spans 494–504 (VTGTSDTTSNN). Positions 494–557 (VTGTSDTTSN…TTSTPLSSPL (64 aa)) are disordered. A compositionally biased stretch (low complexity) spans 505-557 (TATVISTAPPASSAVTSPSLSPSPSASASTSEASSASETSTTQTTSTPLSSPL).

Belongs to the POU transcription factor family. Class-2 subfamily. As to quaternary structure, interacts with POU2AF1; the interaction increases POU2F1 transactivation activity. Interacts with NR3C1, AR, PGR and HCFC1. (Microbial infection) Associates with the herpes simplex virus VP16-induced complex; binding to HCFC1 activates the viral transcriptional activator VP16 for association with POU2F1, to form a multiprotein-DNA complex responsible for activating transcription of the viral immediate early genes. In terms of assembly, (Microbial infection) Interacts with human herpesvirus 8 (KSHV) protein RTA/ORF50; this interaction enhances RTA/ORF50-mediated transactivation of several viral promoters including K-bZIP promoter. Post-translationally, phosphorylated by PRKDC. As to expression, ubiquitous. Isoform 2 is lymphocyte-specific.

The protein resides in the nucleus. Its function is as follows. Transcription factor that binds to the octamer motif (5'-ATTTGCAT-3') and activates the promoters of the genes for some small nuclear RNAs (snRNA) and of genes such as those for histone H2B and immunoglobulins. Modulates transcription transactivation by NR3C1, AR and PGR. In terms of biological role, (Microbial infection) In case of human herpes simplex virus (HSV) infection, POU2F1 forms a multiprotein-DNA complex with the viral transactivator protein VP16 and HCFC1 thereby enabling the transcription of the viral immediate early genes. The polypeptide is POU domain, class 2, transcription factor 1 (POU2F1) (Homo sapiens (Human)).